Reading from the N-terminus, the 883-residue chain is MLKHSLIAASVITTLAGCSSLQSSEQQVVNSLADNLDIQYEVLTNHGANEGLACQDMGAEWASCNKVNMTLVNQGEAVDSKDWAIYFHSIRLILDVDNEQFKISRVTGDLHKLEPTDKFDGFAAGEEVVLPLVGEYWQLFETDFMPGAFVSAPNAEPKMIASLNTEDVASFVTGLEGNNLKRTPDDNNVFANAVSRFEKNEDLATQDVSTTLLPTPMHVEAGKGKVDIADGIALPKDAFDATQFAAIQDRAEVVGVDVRGDLPVSITVVPADFTGELAKSGAYEMSIKGDGIVIKAFDQAGAFYAVQSIFGLVDSQNADSLPQLSIKDAPRFDYRGVMVDVARNFHSKDAILATLDQMAAYKMNKLHLHLTDDEGWRLEIPGLPELTEVGANRCFDTQEKSCLLPQLGSGPTTDNFGSGYFSKADYVEILKYAKARNIEVIPEIDMPAHARAAVVSMEARYDRLMEEGKEAEANEYRLMDPQDTSNVTTVQFYNKQSFINPCMESSTRFVDKVISEVAAMHQEAGAPLTTWHFGGDEAKNIKLGAGFQDVNAEDKVSWKGTIDLSKQDKPFAQSPQCQTLITDGTVSDFAHLPSHFAEEVSKIVAEKGIPNFQAWQDGLKYSDGEKAFATENTRVNFWDVLYWGGTSSVYEWSKKGYDVIVSNPDYVYMDMPYEVDPKERGYYWATRATDTRKMFGFAPENMPQNAETSVDRDGNGFTGKGEIEAKPFYGLSAQLWSETVRNDEQYEYMVFPRVLAAAQRAWHRADWENDYKVGVEYSQNSNLVDKASLNQDYNRFANVLGQRELAKLEKSGIDYRLPVPGAKVEDGKLAMNVQFPGVTLQYSLDGENWLTYADNARPNVTGEVFIRSVSATGEKVSRITSVK.

An N-terminal signal peptide occupies residues Met-1 to Gly-17. Residue Cys-18 is the site of N-palmitoyl cysteine attachment. Cys-18 carries the S-diacylglycerol cysteine lipid modification. 3 cysteine pairs are disulfide-bonded: Cys-54–Cys-64, Cys-394–Cys-402, and Cys-502–Cys-577. The active-site Proton donor is Glu-537.

This sequence belongs to the glycosyl hydrolase 20 family. In terms of processing, this protein is probably a lipoprotein, its processing is inhibited by globomycin.

The protein localises to the cell outer membrane. It carries out the reaction Hydrolysis of terminal non-reducing N-acetyl-D-hexosamine residues in N-acetyl-beta-D-hexosaminides.. Its pathway is glycan degradation; chitin degradation. Its function is as follows. Hydrolysis of terminal, non-reducing N-acetyl-beta-D-glucosamine residues in chitobiose and higher analogs, and in glycoproteins. This Vibrio harveyi (Beneckea harveyi) protein is N,N'-diacetylchitobiase (chb).